The sequence spans 101 residues: Putative pterin-4-alpha-carbinolamine dehydratase (101 aa).

It belongs to the pterin-4-alpha-carbinolamine dehydratase family.

It carries out the reaction (4aS,6R)-4a-hydroxy-L-erythro-5,6,7,8-tetrahydrobiopterin = (6R)-L-erythro-6,7-dihydrobiopterin + H2O. This is Putative pterin-4-alpha-carbinolamine dehydratase from Rhizobium rhizogenes (strain K84 / ATCC BAA-868) (Agrobacterium radiobacter).